The sequence spans 172 residues: S-ribosylhomocysteine lyase (172 aa).

3 residues coordinate Fe cation: histidine 54, histidine 58, and cysteine 128.

Belongs to the LuxS family. Homodimer. The cofactor is Fe cation.

It carries out the reaction S-(5-deoxy-D-ribos-5-yl)-L-homocysteine = (S)-4,5-dihydroxypentane-2,3-dione + L-homocysteine. Involved in the synthesis of autoinducer 2 (AI-2) which is secreted by bacteria and is used to communicate both the cell density and the metabolic potential of the environment. The regulation of gene expression in response to changes in cell density is called quorum sensing. Catalyzes the transformation of S-ribosylhomocysteine (RHC) to homocysteine (HC) and 4,5-dihydroxy-2,3-pentadione (DPD). This chain is S-ribosylhomocysteine lyase, found in Vibrio vulnificus (strain CMCP6).